We begin with the raw amino-acid sequence, 493 residues long: Protein LTV1 homolog (493 aa).

3 disordered regions span residues 42-63, 97-119, and 170-207; these read AAAR…QRQE, PNQA…KLML, and IQAM…DENE. Over residues 176–207 the composition is skewed to acidic residues; the sequence is GDSDDEEWDDEDGEEQSDMDFDSDDLNEDENE. Phosphoserine occurs at positions 345, 369, 370, 424, and 427. Positions 359-387 are disordered; the sequence is VIDEPRRSRRSSASTNPAPIQIDPKTGLP. Positions 437–468 form a coiled coil; the sequence is KDETHEEKKERKRLLKDYRNERRIEKKANTEA. Residues 465 to 474 are compositionally biased toward basic and acidic residues; sequence NTEAFKEEKK. The disordered stretch occupies residues 465–493; sequence NTEAFKEEKKRQTHVKINQRTNQQGASIV. Residues 479 to 493 show a composition bias toward polar residues; that stretch reads VKINQRTNQQGASIV.

The protein belongs to the LTV1 family. As to quaternary structure, interacts with RpS3; the interaction is RNA-independent. Associates with free 40S ribosome subunits.

The protein resides in the cytoplasm. Functionally, necessary for the biogenesis of 40S ribosome subunits by regulating pre-rRNA processing. Non-ribosomal factor required for efficient nuclear export of the ribosomal 40S subunit. Necessary for endoreplication driven by Myc. In Drosophila melanogaster (Fruit fly), this protein is Protein LTV1 homolog.